A 249-amino-acid polypeptide reads, in one-letter code: Eukaryotic translation initiation factor 3 subunit J-A (249 aa).

Over residues 1–15 (MADADSWDADSFEPE) the composition is skewed to acidic residues. The tract at residues 1–104 (MADADSWDAD…DTPLTPEDEL (104 aa)) is disordered. The segment covering 16 to 27 (EPIKKAAVHDKW) has biased composition (basic and acidic residues). The span at 28-52 (EGEDEDDDVKDNWDDDEEEEKEEEE) shows a compositional bias: acidic residues. Positions 34–96 (DDVKDNWDDD…QQLEETKRDT (63 aa)) form a coiled coil. The segment covering 53–96 (EKKTEAKPTEKKKLSEKIKEKENLQRKKQEELRKQQLEETKRDT) has biased composition (basic and acidic residues).

Belongs to the eIF-3 subunit J family. Component of the eukaryotic translation initiation factor 3 (eIF-3) complex, which is composed of 13 subunits: eif3a, eif3b, eif3c, eif3d, eif3e, eif3f, eif3g, eif3h, eif3i, eif3j, eif3k, eif3l and eif3m.

The protein localises to the cytoplasm. In terms of biological role, component of the eukaryotic translation initiation factor 3 (eIF-3) complex, which is involved in protein synthesis of a specialized repertoire of mRNAs and, together with other initiation factors, stimulates binding of mRNA and methionyl-tRNAi to the 40S ribosome. The eIF-3 complex specifically targets and initiates translation of a subset of mRNAs involved in cell proliferation. This is Eukaryotic translation initiation factor 3 subunit J-A (eif3ja) from Danio rerio (Zebrafish).